Here is a 400-residue protein sequence, read N- to C-terminus: Protein phyllopod (400 aa).

Residues 109 to 127 (QERTKLRPVAMVRPTVRVQ) are interaction with sina. Residues 125 to 145 (RVQPQSQPQLQPQVPINPTPA) form a disordered region. Over residues 127–138 (QPQSQPQLQPQV) the composition is skewed to low complexity. An interaction with ttk region spans residues 241-320 (YQRFPQPSVD…TAISEVLPTA (80 aa)). The stretch at 319 to 362 (TARYQVTHEENKENQQAQEMELELEEEEEVDGRAELEVVQEAEA) forms a coiled coil. Residues 346–382 (EEVDGRAELEVVQEAEAPLEPQSHHKQGNSHQNSHQA) are disordered.

Component of some E3 complex at least composed of sina, ebi and phyl, required for the degradation of ttk. In terms of tissue distribution, in embryos, it is ubiquitously present before cellularization. During stages 9-11, it is expressed in neuroblasts and the SOP cells. From stage 12 onward, it decreases, but remains in a subset of PNS cells at stages 12-14. Weakly expressed in wing imaginal disks, in the SOP cells of wing margin bristles, notal macrochaetes, and other sensory organs. In leg disks, it is expressed in the precursors of the femoral chordotonal organs, as well as in external sensory SOP cells. Strongly expressed in the eye-antenna disk, it is specifically expressed in R1, R6 and R7 cells, and not in R3, R3, R4, R5 and R8 cells.

The protein resides in the nucleus. Functionally, essential adapter component of E3 ubiquitin ligase complexes; involved in R7 photoreceptor cell differentiation, embryonic nervous system, external sensory organ development and specification of particular muscles. E3 ubiquitin ligase complexes mediate ubiquitination and subsequent proteasomal degradation of target proteins. Required for specification of R7 photoreceptor cell fate in the eye by participating in the ubiquitination and subsequent proteasomal degradation of Tramtrack (ttk), a general inhibitor of photoreceptor differentiation. Acts downstream of Notch signaling to specify the fate of the SOP (sensory organ precursor) cells and their progeny, probably via the sina-mediated proteasomal degradation of ttk. Its restricted pattern of expression, upon Notch and Ras signaling pathways, suggests that it acts as a key determinant in E3 complexes to trigger protein proteolysis in appropriate cells. The sequence is that of Protein phyllopod (phyl) from Drosophila melanogaster (Fruit fly).